Consider the following 385-residue polypeptide: Acetate kinase (385 aa).

Asn-9 serves as a coordination point for Mg(2+). Residue Lys-16 coordinates ATP. Substrate is bound at residue Arg-87. The Proton donor/acceptor role is filled by Asp-144. ATP contacts are provided by residues 202 to 206 (HLGSG) and 277 to 279 (DMR). Position 373 (Glu-373) interacts with Mg(2+).

It belongs to the acetokinase family. In terms of assembly, homodimer. It depends on Mg(2+) as a cofactor. Mn(2+) is required as a cofactor.

The protein resides in the cytoplasm. It carries out the reaction acetate + ATP = acetyl phosphate + ADP. The protein operates within metabolic intermediate biosynthesis; acetyl-CoA biosynthesis; acetyl-CoA from acetate: step 1/2. Functionally, catalyzes the formation of acetyl phosphate from acetate and ATP. Can also catalyze the reverse reaction. The protein is Acetate kinase of Rickettsia felis (strain ATCC VR-1525 / URRWXCal2) (Rickettsia azadi).